A 347-amino-acid chain; its full sequence is DNA primase small subunit PriS (347 aa).

Residues D95 and D97 contribute to the active site. The Zn(2+) site is built by C106, H108, C114, and C117. The Zinc knuckle motif motif lies at 106 to 117 (CNHEPGTVCPIC). Residue D280 is part of the active site.

It belongs to the eukaryotic-type primase small subunit family. As to quaternary structure, heterodimer of a small subunit (PriS) and a large subunit (PriL). Both participate in formation of the active center, but the ATP-binding site is exclusively located on the small subunit. The cofactor is Mg(2+). It depends on Mn(2+) as a cofactor.

Functionally, catalytic subunit of DNA primase, an RNA polymerase that catalyzes the synthesis of short RNA molecules used as primers for DNA polymerase during DNA replication. The small subunit contains the primase catalytic core and has DNA synthesis activity on its own. Binding to the large subunit stabilizes and modulates the activity, increasing the rate of DNA synthesis while decreasing the length of the DNA fragments, and conferring RNA synthesis capability. The DNA polymerase activity may enable DNA primase to also catalyze primer extension after primer synthesis. May also play a role in DNA repair. The polypeptide is DNA primase small subunit PriS (Pyrococcus furiosus (strain ATCC 43587 / DSM 3638 / JCM 8422 / Vc1)).